The chain runs to 459 residues: MIKDPFARLGLEREVLTVSQLNGRARVLLEDVFSSIWVEGEISNLSRPASGHVYFTLKDSGAQVRCALFRQSAARVRQALKDGLQVKVRGKVSLFEGRGDYQLILDTVEPAGDGALRLAFDALKAKLSDEGLFSAERKIALPVHPQRIGIISSPTGAVIRDIISVFRRRAPRVELTLIPTAVQGREAINQIVRALKLADSRGFDALILARGGGSLEDLWCFNEEAVARAIDACVTPIVSAVGHETDVSISDFVADVRAPTPSAAAELLAPDSSDLHRRVDSLHRRLVSRMQDRLMRERLRLEGISRRLRHPGERLRQQSQRLDDLDMRLRRAFEQNMHQRQVRLAHMQSRLAAQHPGRTLGFLRQRLDALAERLPRAIREQIKARRLQLQSQAQTLNVVSPLATLGRGYSILLDERGHAIRNAAQTRTGQRLTARLGEGELQVRVEDNHLTPVTLSLLD.

It belongs to the XseA family. In terms of assembly, heterooligomer composed of large and small subunits.

Its subcellular location is the cytoplasm. The enzyme catalyses Exonucleolytic cleavage in either 5'- to 3'- or 3'- to 5'-direction to yield nucleoside 5'-phosphates.. Bidirectionally degrades single-stranded DNA into large acid-insoluble oligonucleotides, which are then degraded further into small acid-soluble oligonucleotides. This Pseudomonas savastanoi pv. phaseolicola (strain 1448A / Race 6) (Pseudomonas syringae pv. phaseolicola (strain 1448A / Race 6)) protein is Exodeoxyribonuclease 7 large subunit.